Consider the following 119-residue polypeptide: MFKKNDRSQSRERRHMRVRKKIFGTAERPRLSVYRSEKHIYAQLIDDVEGKTLVAASSAEQGFDGVGSNKEGAKLVGKMVAEKALEKGLKKVVFDRGGFIYHGRIKELAEGAREAGLDF.

Belongs to the universal ribosomal protein uL18 family. In terms of assembly, part of the 50S ribosomal subunit; part of the 5S rRNA/L5/L18/L25 subcomplex. Contacts the 5S and 23S rRNAs.

This is one of the proteins that bind and probably mediate the attachment of the 5S RNA into the large ribosomal subunit, where it forms part of the central protuberance. This Clostridium botulinum (strain Okra / Type B1) protein is Large ribosomal subunit protein uL18.